Here is a 614-residue protein sequence, read N- to C-terminus: 2-succinyl-5-enolpyruvyl-6-hydroxy-3-cyclohexene-1-carboxylate synthase (614 aa).

The protein belongs to the TPP enzyme family. MenD subfamily. Homodimer. Requires Mg(2+) as cofactor. Mn(2+) serves as cofactor. It depends on thiamine diphosphate as a cofactor.

It carries out the reaction isochorismate + 2-oxoglutarate + H(+) = 5-enolpyruvoyl-6-hydroxy-2-succinyl-cyclohex-3-ene-1-carboxylate + CO2. It participates in quinol/quinone metabolism; 1,4-dihydroxy-2-naphthoate biosynthesis; 1,4-dihydroxy-2-naphthoate from chorismate: step 2/7. The protein operates within quinol/quinone metabolism; menaquinone biosynthesis. Its function is as follows. Catalyzes the thiamine diphosphate-dependent decarboxylation of 2-oxoglutarate and the subsequent addition of the resulting succinic semialdehyde-thiamine pyrophosphate anion to isochorismate to yield 2-succinyl-5-enolpyruvyl-6-hydroxy-3-cyclohexene-1-carboxylate (SEPHCHC). This is 2-succinyl-5-enolpyruvyl-6-hydroxy-3-cyclohexene-1-carboxylate synthase from Sorangium cellulosum (strain So ce56) (Polyangium cellulosum (strain So ce56)).